The sequence spans 91 residues: Putative membrane protein insertion efficiency factor (91 aa).

The tract at residues 66 to 91 (GGVDPVPSCGCHSDKETTPKEKSDNA) is disordered. Basic and acidic residues predominate over residues 77-91 (HSDKETTPKEKSDNA).

The protein belongs to the UPF0161 family.

It is found in the cell inner membrane. In terms of biological role, could be involved in insertion of integral membrane proteins into the membrane. This is Putative membrane protein insertion efficiency factor from Hydrogenovibrio crunogenus (strain DSM 25203 / XCL-2) (Thiomicrospira crunogena).